The following is a 212-amino-acid chain: ATP-dependent Clp protease proteolytic subunit 2 (212 aa).

Residues 1 to 20 are disordered; that stretch reads MSHNTSIASQGMPAMAGPET. The active-site Nucleophile is the S107. The active site involves H132.

Belongs to the peptidase S14 family. In terms of assembly, fourteen ClpP subunits assemble into 2 heptameric rings which stack back to back to give a disk-like structure with a central cavity, resembling the structure of eukaryotic proteasomes.

The protein resides in the cytoplasm. It catalyses the reaction Hydrolysis of proteins to small peptides in the presence of ATP and magnesium. alpha-casein is the usual test substrate. In the absence of ATP, only oligopeptides shorter than five residues are hydrolyzed (such as succinyl-Leu-Tyr-|-NHMec, and Leu-Tyr-Leu-|-Tyr-Trp, in which cleavage of the -Tyr-|-Leu- and -Tyr-|-Trp bonds also occurs).. In terms of biological role, cleaves peptides in various proteins in a process that requires ATP hydrolysis. Has a chymotrypsin-like activity. Plays a major role in the degradation of misfolded proteins. The polypeptide is ATP-dependent Clp protease proteolytic subunit 2 (Cutibacterium acnes (strain DSM 16379 / KPA171202) (Propionibacterium acnes)).